The following is a 374-amino-acid chain: Tryptophan--tRNA ligase (374 aa).

Residues 81-89 (PSGPVHIGH) carry the 'HIGH' region motif. Residues 258 to 262 (KMSAS) carry the 'KMSKS' region motif.

Belongs to the class-I aminoacyl-tRNA synthetase family.

The protein resides in the cytoplasm. The enzyme catalyses tRNA(Trp) + L-tryptophan + ATP = L-tryptophyl-tRNA(Trp) + AMP + diphosphate + H(+). This Pyrobaculum calidifontis (strain DSM 21063 / JCM 11548 / VA1) protein is Tryptophan--tRNA ligase.